The sequence spans 266 residues: Glutamate racemase (266 aa).

Substrate-binding positions include 9–10 and 41–42; these read DS and YG. Catalysis depends on cysteine 72, which acts as the Proton donor/acceptor. A substrate-binding site is contributed by 73 to 74; the sequence is NT. The Proton donor/acceptor role is filled by cysteine 184. 185–186 serves as a coordination point for substrate; the sequence is TH.

The protein belongs to the aspartate/glutamate racemases family. As to quaternary structure, homodimer.

It catalyses the reaction L-glutamate = D-glutamate. Its pathway is cell wall biogenesis; peptidoglycan biosynthesis. In terms of biological role, provides the (R)-glutamate required for cell wall biosynthesis. This Staphylococcus aureus (strain MRSA252) protein is Glutamate racemase.